A 304-amino-acid chain; its full sequence is Protein Largen (304 aa).

Positions 1–13 (MSAKSKGNPSSSC) are enriched in polar residues. Disordered regions lie at residues 1 to 27 (MSAK…TKVK), 66 to 91 (QLED…TASS), 114 to 160 (LTVL…GGLP), and 239 to 304 (HPPG…TTTV). A coiled-coil region spans residues 33–70 (IVEDLELVLGDLKDVAKELKEVVDQIDTLTSDLQLEDE). The segment covering 77–91 (TDTLNSSSSGTTASS) has biased composition (low complexity). 3 stretches are compositionally biased toward pro residues: residues 120 to 129 (PNPPPPPPRL), 239 to 261 (HPPG…PPFP), and 277 to 289 (PIRP…PTAP).

Functionally, regulator of cell size that promotes cell size increase independently of mTOR and Hippo signaling pathways. Acts by stimulating the translation of specific mRNAs, including those encoding proteins affecting mitochondrial functions. Increases mitochondrial mass and respiration. This is Protein Largen (PRR16) from Homo sapiens (Human).